Reading from the N-terminus, the 298-residue chain is Transcription factor RHD6 (298 aa).

Disordered stretches follow at residues 1–58 (MALV…SDHQ) and 157–213 (TGSR…AKNR). The segment covering 15–27 (SKQNSSSSEDLSS) has biased composition (low complexity). Composition is skewed to polar residues over residues 157–168 (TGSRNESLSPKS) and 177–190 (GEST…SSGV). A compositionally biased stretch (low complexity) spans 191–205 (TGKTKPKPTTSPKDP). The tract at residues 201–214 (SPKDPQSLAAKNRR) is basic motif. The region spanning 201–250 (SPKDPQSLAAKNRRERISERLKILQELVPNGTKVDLVTMLEKAISYVKFL) is the bHLH domain. Residues 215-250 (ERISERLKILQELVPNGTKVDLVTMLEKAISYVKFL) form a helix-loop-helix motif region.

As to quaternary structure, homodimer. Forms heterodimers with RSL1. Interacts with TIFY10B/JAZ2, TIFY6A/JAZ4, TIFY5A/JAZ8, TIFY7/JAZ9 and TIFY9/JAZ10. Expressed constitutively in flowers. Expressed in root epidermal hair cells.

Its subcellular location is the nucleus. Its function is as follows. Transcription factor that is specifically required for the development of root hairs. Acts with RSL1 to positively regulate root hair development. Acts downstream of genes that regulate epidermal pattern formation, such as GL2. Targets directly RSL4, another transcription factor involved in the regulation of root hair elongation. Acts with RSL1 as transcription factor that integrates a jasmonate (JA) signaling pathway that stimulates root hair growth. The sequence is that of Transcription factor RHD6 from Arabidopsis thaliana (Mouse-ear cress).